Reading from the N-terminus, the 89-residue chain is Small ribosomal subunit protein uS15 (89 aa).

Belongs to the universal ribosomal protein uS15 family. Part of the 30S ribosomal subunit. Forms a bridge to the 50S subunit in the 70S ribosome, contacting the 23S rRNA.

One of the primary rRNA binding proteins, it binds directly to 16S rRNA where it helps nucleate assembly of the platform of the 30S subunit by binding and bridging several RNA helices of the 16S rRNA. Its function is as follows. Forms an intersubunit bridge (bridge B4) with the 23S rRNA of the 50S subunit in the ribosome. The sequence is that of Small ribosomal subunit protein uS15 from Thermobifida fusca (strain YX).